The chain runs to 211 residues: MSSAGIPIQKKKNAYSAVKVDPNDDYATPGAFELERLFWKGSAKYTHVNEVWPGIYIGDETARDKATLQRLKITHILNSAHGKFNINTGANYYKDMLIHYYGIEAFDSPDFNLSVFFYSAAKFIRAGLNTPKLLVHCAMGRSRSATLVLAYLMIYKNMTVVDAIQEVIQRRCILPNRGFLKQLRTLDIQLAIERSNRRNGIKNNGEEKEAY.

In terms of domain architecture, Tyrosine-protein phosphatase spans 47–192 (HVNEVWPGIY…LRTLDIQLAI (146 aa)). 136-143 (HCAMGRSR) provides a ligand contact to substrate. Catalysis depends on C137, which acts as the Phosphocysteine intermediate.

It belongs to the protein-tyrosine phosphatase family. Non-receptor class dual specificity subfamily.

It is found in the cytoplasm. The protein resides in the nucleus. It carries out the reaction O-phospho-L-tyrosyl-[protein] + H2O = L-tyrosyl-[protein] + phosphate. It catalyses the reaction O-phospho-L-seryl-[protein] + H2O = L-seryl-[protein] + phosphate. The catalysed reaction is O-phospho-L-threonyl-[protein] + H2O = L-threonyl-[protein] + phosphate. In terms of biological role, dual specificity phosphatase able to dephosphorylate phosphotyrosine, phosphoserine and phosphothreonine residues within the same substrate, with a preference for phosphotyrosine as a substrate. Involved in the modulation of AMPK and MAPK1/2 signaling pathways. This Callorhinchus milii (Ghost shark) protein is Dual specificity phosphatase 29 (dusp29).